Here is a 288-residue protein sequence, read N- to C-terminus: Eukaryotic translation initiation factor 3 subunit G (288 aa).

Disordered regions lie at residues 1–33 (MSKL…NKDG) and 156–197 (DEPT…GGER). One can recognise an RRM domain in the interval 208 to 286 (ATLRVTNVSE…LILRVEFAKR (79 aa)).

This sequence belongs to the eIF-3 subunit G family. As to quaternary structure, component of the eukaryotic translation initiation factor 3 (eIF-3) complex.

Its subcellular location is the cytoplasm. RNA-binding component of the eukaryotic translation initiation factor 3 (eIF-3) complex, which is involved in protein synthesis of a specialized repertoire of mRNAs and, together with other initiation factors, stimulates binding of mRNA and methionyl-tRNAi to the 40S ribosome. The eIF-3 complex specifically targets and initiates translation of a subset of mRNAs involved in cell proliferation. This subunit can bind 18S rRNA. The sequence is that of Eukaryotic translation initiation factor 3 subunit G (tif35) from Aspergillus niger (strain ATCC MYA-4892 / CBS 513.88 / FGSC A1513).